The primary structure comprises 155 residues: Small ribosomal subunit protein uS7 (155 aa).

It belongs to the universal ribosomal protein uS7 family. Part of the 30S ribosomal subunit. Contacts proteins S9 and S11.

Its function is as follows. One of the primary rRNA binding proteins, it binds directly to 16S rRNA where it nucleates assembly of the head domain of the 30S subunit. Is located at the subunit interface close to the decoding center, probably blocks exit of the E-site tRNA. The sequence is that of Small ribosomal subunit protein uS7 from Corynebacterium diphtheriae (strain ATCC 700971 / NCTC 13129 / Biotype gravis).